We begin with the raw amino-acid sequence, 474 residues long: Ribulose bisphosphate carboxylase large chain (474 aa).

Residues Asn-117 and Thr-167 each contribute to the substrate site. Lys-169 functions as the Proton acceptor in the catalytic mechanism. A substrate-binding site is contributed by Lys-171. Mg(2+)-binding residues include Lys-195, Asp-197, and Glu-198. Lys-195 carries the post-translational modification N6-carboxylysine. The active-site Proton acceptor is His-288. Residues Arg-289, His-321, and Ser-373 each coordinate substrate.

The protein belongs to the RuBisCO large chain family. Type I subfamily. Heterohexadecamer of 8 large chains and 8 small chains. Mg(2+) is required as a cofactor.

It carries out the reaction 2 (2R)-3-phosphoglycerate + 2 H(+) = D-ribulose 1,5-bisphosphate + CO2 + H2O. The catalysed reaction is D-ribulose 1,5-bisphosphate + O2 = 2-phosphoglycolate + (2R)-3-phosphoglycerate + 2 H(+). Its function is as follows. RuBisCO catalyzes two reactions: the carboxylation of D-ribulose 1,5-bisphosphate, the primary event in carbon dioxide fixation, as well as the oxidative fragmentation of the pentose substrate. Both reactions occur simultaneously and in competition at the same active site. This chain is Ribulose bisphosphate carboxylase large chain, found in Hydrogenophilus thermoluteolus (Pseudomonas hydrogenothermophila).